A 1465-amino-acid polypeptide reads, in one-letter code: Protein clueless (1465 aa).

The interval 1 to 87 is disordered; that stretch reads MALEIDAKNA…SNGHSENGDA (87 aa). Residues 30-51 are compositionally biased toward low complexity; sequence HNNNNNAPAAGEKNLVNGSSAA. The span at 52–61 shows a compositional bias: basic residues; the sequence is TKKKGKKNRN. Phosphoserine is present on Ser-273. One can recognise a Clu domain in the interval 427-669; the sequence is RAEDAFSSKL…RTFPPDVNFL (243 aa). The span at 742-767 shows a compositional bias: basic and acidic residues; sequence AEKQEEPNEEQPEKTEEQPAEKEESK. Disordered stretches follow at residues 742-776 and 962-1021; these read AEKQ…TKSA and VSSD…SNSD. The segment covering 970-986 has biased composition (basic residues); the sequence is KQPRNNSGKHNKHKAAK. 2 stretches are compositionally biased toward low complexity: residues 987–1003 and 1010–1020; these read ASKP…ATAA and ATTSGATSSNS. 3 TPR repeats span residues 1114–1147, 1240–1273, and 1275–1308; these read AYNF…LNNV, ALID…NLKY, and GNKA…EKET. The tract at residues 1428 to 1465 is disordered; that stretch reads NNNDNASETEQPKDEASAAGTPTQLTNGSEESTATVSS. Positions 1447-1465 are enriched in polar residues; the sequence is GTPTQLTNGSEESTATVSS.

It belongs to the CLU family.

It is found in the cytoplasm. MRNA-binding protein involved in proper cytoplasmic distribution of mitochondria. The polypeptide is Protein clueless (Drosophila virilis (Fruit fly)).